The primary structure comprises 1684 residues: GRIP and coiled-coil domain-containing protein 2 (1684 aa).

Met1 carries the N-acetylmethionine modification. The tract at residues 1 to 22 is disordered; it reads MEDLVQDGVASPATPGTGKSKL. The residue at position 11 (Ser11) is a Phosphoserine. Thr14 carries the phosphothreonine modification. The stretch at 110–1618 forms a coiled coil; the sequence is VTKMGDAHKE…REKSAANLEY (1509 aa). Ser236, Ser1483, and Ser1487 each carry phosphoserine. The disordered stretch occupies residues 1475-1502; it reads LKNEPTTRSPVSSQQSLKNLRERRNTDL. The span at 1477-1492 shows a compositional bias: polar residues; the sequence is NEPTTRSPVSSQQSLK. The tract at residues 1574 to 1613 is mediates interaction with RAB6A; it reads HLNGLLRETEATNAILMEQIKLLKSEIRRLERNQEREKSA. The mediates interaction with RAB9A stretch occupies residues 1574–1684; sequence HLNGLLRETE…SYLHSWSGLR (111 aa). The 51-residue stretch at 1609 to 1659 folds into the GRIP domain; that stretch reads REKSAANLEYLKNVLLQFIFLKPGSERERLLPVINTMLQLSPEEKGKLAAV.

In terms of assembly, homodimer. Interacts (via GRIP domain) with RAB6A (preferentially in its GTP-bound form). May interact (RAB6A-dependent) with ARL1; according to PubMed:19703403, RAB6A and ARL1 are not involved in GCC2 Golgi localization as proposed by PubMed:18243103. Interacts (probably via GRIP domain) with RAB9A (preferentially in its GTP-bound form). Interacts with CLASP1 and CLASP2; recruits both proteins to membranes of the TGN. Interacts with STX16. In terms of tissue distribution, ubiquitous.

It is found in the cytoplasm. The protein resides in the golgi apparatus. It localises to the trans-Golgi network membrane. Functionally, golgin which probably tethers transport vesicles to the trans-Golgi network (TGN) and regulates vesicular transport between the endosomes and the Golgi. As a RAB9A effector it is involved in recycling of the mannose 6-phosphate receptor from the late endosomes to the TGN. May also play a role in transport between the recycling endosomes and the Golgi. Required for maintenance of the Golgi structure, it is involved in the biogenesis of noncentrosomal, Golgi-associated microtubules through recruitment of CLASP1 and CLASP2. The sequence is that of GRIP and coiled-coil domain-containing protein 2 (GCC2) from Homo sapiens (Human).